Reading from the N-terminus, the 288-residue chain is MGMGFNPIKALFTGIGTVCVGVGALLSILCIINQTQHNIAFQNIYFIQLNTTSIFSVANQTAVVNNTSNLLNELTGTLVDTLETYIDQGATDLIEQVEQEMKDVSELPDWYSIGLWNYCQGNSSDYTNPTYCSTPSPSYYFNPLTMLETSINNATGSQINITLPSEVDLGLKVLKGACYAMRAMYILGFIFFALTIVSIVISCLPFFGPLFLNVFSFFATIFTFIAAVIAVATYRIAISELEKNIEILNIPIVLGKKIYAYSFLSAAAGLAACILYFIGNLTSGYSPL.

Residues 1 to 11 (MGMGFNPIKAL) are Cytoplasmic-facing. A helical transmembrane segment spans residues 12-32 (FTGIGTVCVGVGALLSILCII). Residues Asn-33, Asn-50, Asn-59, Asn-66, Asn-122, Asn-153, and Asn-160 are each glycosylated (N-linked (GlcNAc...) asparagine). The Extracellular portion of the chain corresponds to 33-185 (NQTQHNIAFQ…GACYAMRAMY (153 aa)). Residues 186–206 (ILGFIFFALTIVSIVISCLPF) traverse the membrane as a helical segment. The Cytoplasmic segment spans residues 207-210 (FGPL). Residues 211 to 231 (FLNVFSFFATIFTFIAAVIAV) traverse the membrane as a helical segment. Topologically, residues 232-257 (ATYRIAISELEKNIEILNIPIVLGKK) are extracellular. Residues 258-278 (IYAYSFLSAAAGLAACILYFI) traverse the membrane as a helical segment. Residues 279-288 (GNLTSGYSPL) are Cytoplasmic-facing.

This sequence belongs to the SUR7 family.

The protein resides in the golgi apparatus membrane. It localises to the cell membrane. The protein localises to the cell tip. Contributes to the wild-type cellular response to nitrogen stress through signaling pathways that regulate the expression of genes involved in amino acid biosynthesis. Required for wild-type filamentous growth, cell growth, and cell-cell adhesion. This chain is SUR7 family protein pun1 (pun1), found in Schizosaccharomyces pombe (strain 972 / ATCC 24843) (Fission yeast).